A 240-amino-acid chain; its full sequence is Uridylate kinase (240 aa).

An ATP-binding site is contributed by 14-17 (KLSG). Glycine 56 contacts UMP. ATP contacts are provided by glycine 57 and arginine 61. Residues aspartate 76 and 137-144 (TGNPFFTT) each bind UMP. 3 residues coordinate ATP: threonine 164, tyrosine 170, and aspartate 173.

Belongs to the UMP kinase family. As to quaternary structure, homohexamer.

The protein localises to the cytoplasm. The enzyme catalyses UMP + ATP = UDP + ADP. It participates in pyrimidine metabolism; CTP biosynthesis via de novo pathway; UDP from UMP (UMPK route): step 1/1. With respect to regulation, inhibited by UTP. Catalyzes the reversible phosphorylation of UMP to UDP. This is Uridylate kinase from Acidovorax sp. (strain JS42).